The chain runs to 341 residues: Coiled-coil domain-containing protein 86 (341 aa).

The tract at residues 1 to 341 (MGTPLRRSRR…QPPQRPVAKV (341 aa)) is disordered. At Ser-18 the chain carries Phosphoserine. Positions 26 to 49 (EVSRAKRALVDFKSNPEETRELES) are enriched in basic and acidic residues. Residue Ser-59 is modified to Phosphoserine. Residues 64–73 (PETSPESPCP) show a composition bias toward low complexity. Phosphothreonine is present on Thr-66. Residues Ser-67, Ser-70, Ser-81, Ser-92, Ser-103, Ser-114, and Ser-124 each carry the phosphoserine modification. The segment covering 105-114 (AGQTESNPES) has biased composition (polar residues). Over residues 130-139 (EVAHAKEEVI) the composition is skewed to basic and acidic residues. 4 positions are modified to phosphoserine: Ser-142, Ser-169, Ser-170, and Ser-200. The span at 219–235 (GKPKSGRVWKDRSKKRF) shows a compositional bias: basic residues. A compositionally biased stretch (basic and acidic residues) spans 254–298 (ERQERKLAKDFARHLEEEKQRRRQEKKERRAENLRRRLENERKAE). A coiled-coil region spans residues 261–304 (AKDFARHLEEEKQRRRQEKKERRAENLRRRLENERKAEIVQVIR). A compositionally biased stretch (basic residues) spans 307–317 (AKLKKAKKKQL). Citrulline is present on Arg-323.

Citrullinated by PADI4.

The protein resides in the nucleus. It is found in the chromosome. It localises to the nucleolus. In terms of biological role, required for proper chromosome segregation during mitosis and error-free mitotic progression. This chain is Coiled-coil domain-containing protein 86, found in Rattus norvegicus (Rat).